A 478-amino-acid polypeptide reads, in one-letter code: Ribosomal RNA small subunit methyltransferase F (478 aa).

Residues Ala121–Lys127, Glu145, Asp172, and Asp190 contribute to the S-adenosyl-L-methionine site. Catalysis depends on Cys243, which acts as the Nucleophile.

This sequence belongs to the class I-like SAM-binding methyltransferase superfamily. RsmB/NOP family.

The protein resides in the cytoplasm. It catalyses the reaction cytidine(1407) in 16S rRNA + S-adenosyl-L-methionine = 5-methylcytidine(1407) in 16S rRNA + S-adenosyl-L-homocysteine + H(+). In terms of biological role, specifically methylates the cytosine at position 1407 (m5C1407) of 16S rRNA. This chain is Ribosomal RNA small subunit methyltransferase F, found in Shewanella woodyi (strain ATCC 51908 / MS32).